The following is a 291-amino-acid chain: Probable 2-(5''-triphosphoribosyl)-3'-dephosphocoenzyme-A synthase (291 aa).

Belongs to the CitG/MdcB family.

The enzyme catalyses 3'-dephospho-CoA + ATP = 2'-(5''-triphospho-alpha-D-ribosyl)-3'-dephospho-CoA + adenine. Its function is as follows. Involved in the formation of 2-(5''-phosphoribosyl)-3'-dephosphocoenzyme-A, the prosthetic group of the acyl-carrier protein of the malonate decarboxylase. The sequence is that of Probable 2-(5''-triphosphoribosyl)-3'-dephosphocoenzyme-A synthase from Pseudomonas syringae pv. syringae (strain B728a).